A 419-amino-acid chain; its full sequence is UDP-N-acetylglucosamine 1-carboxyvinyltransferase (419 aa).

22 to 23 lines the phosphoenolpyruvate pocket; that stretch reads KN. A UDP-N-acetyl-alpha-D-glucosamine-binding site is contributed by arginine 91. Cysteine 115 acts as the Proton donor in catalysis. Cysteine 115 carries the 2-(S-cysteinyl)pyruvic acid O-phosphothioketal modification. UDP-N-acetyl-alpha-D-glucosamine-binding positions include 120 to 124, 160 to 163, aspartate 305, and valine 327; these read RPVDL and KVSV.

This sequence belongs to the EPSP synthase family. MurA subfamily.

Its subcellular location is the cytoplasm. The catalysed reaction is phosphoenolpyruvate + UDP-N-acetyl-alpha-D-glucosamine = UDP-N-acetyl-3-O-(1-carboxyvinyl)-alpha-D-glucosamine + phosphate. Its pathway is cell wall biogenesis; peptidoglycan biosynthesis. Functionally, cell wall formation. Adds enolpyruvyl to UDP-N-acetylglucosamine. This Shigella boydii serotype 18 (strain CDC 3083-94 / BS512) protein is UDP-N-acetylglucosamine 1-carboxyvinyltransferase.